A 224-amino-acid chain; its full sequence is Imidazoleglycerol-phosphate dehydratase (224 aa).

It belongs to the imidazoleglycerol-phosphate dehydratase family.

It catalyses the reaction D-erythro-1-(imidazol-4-yl)glycerol 3-phosphate = 3-(imidazol-4-yl)-2-oxopropyl phosphate + H2O. It functions in the pathway amino-acid biosynthesis; L-histidine biosynthesis; L-histidine from 5-phospho-alpha-D-ribose 1-diphosphate: step 6/9. This chain is Imidazoleglycerol-phosphate dehydratase (HIS3), found in Komagataella pastoris (Yeast).